A 426-amino-acid chain; its full sequence is uncharacterized protein (426 aa).

Residue histidine 277 coordinates Zn(2+). Residue glutamate 278 is part of the active site. Zn(2+) is bound by residues histidine 281 and glutamate 357.

Belongs to the peptidase M48B family. Requires Zn(2+) as cofactor.

This is an uncharacterized protein from Bacillus subtilis (strain 168).